A 360-amino-acid polypeptide reads, in one-letter code: Ethanolamine-phosphate cytidylyltransferase (360 aa).

CTP is bound by residues 207 to 208, 215 to 218, Lys-243, 291 to 294, and 321 to 325; these read GF, HTEA, HGDD, and HTEGL.

The protein belongs to the cytidylyltransferase family.

It catalyses the reaction phosphoethanolamine + CTP + H(+) = CDP-ethanolamine + diphosphate. The protein operates within phospholipid metabolism; phosphatidylethanolamine biosynthesis; phosphatidylethanolamine from ethanolamine: step 2/3. Ethanolamine-phosphate cytidylyltransferase that catalyzes the second step in the synthesis of phosphatidylethanolamine (PE) from ethanolamine via the CDP-ethanolamine pathway. This Dictyostelium discoideum (Social amoeba) protein is Ethanolamine-phosphate cytidylyltransferase (pctA).